A 181-amino-acid chain; its full sequence is Large ribosomal subunit protein uL5 (181 aa).

This sequence belongs to the universal ribosomal protein uL5 family. As to quaternary structure, part of the 50S ribosomal subunit; contacts the 5S rRNA and probably tRNA. Forms a bridge to the 30S subunit in the 70S ribosome.

In terms of biological role, this is one of the proteins that bind and probably mediate the attachment of the 5S RNA into the large ribosomal subunit, where it forms part of the central protuberance. In the 70S ribosome it contacts protein S13 of the 30S subunit (bridge B1b), connecting the 2 subunits; this bridge is implicated in subunit movement. May contact the P site tRNA; the 5S rRNA and some of its associated proteins might help stabilize positioning of ribosome-bound tRNAs. This chain is Large ribosomal subunit protein uL5, found in Methanococcus vannielii.